The following is a 472-amino-acid chain: Putative F-box/LRR-repeat protein At5g54820 (472 aa).

Residues 6-54 enclose the F-box domain; that stretch reads QDRLSSLPDILLIMIISFLPLKECVRTSVLSKRWRYLCLETTNLSFKES. LRR repeat units follow at residues 58 to 87, 135 to 164, 183 to 208, 225 to 250, 283 to 308, and 338 to 363; these read NPDITDAEYSRIVAYRSFFCSVDKWVSITQ, NGDISYRHFMYTLPKSVYSLTTLESLKIYG, IGWVRLENLHSLLSKSPSLQSLSIKN, VIEHSDFSYMQCAFELPRIHSFKYSG, SSRISGEVISRIINDLRAAETLTVCP, and MHTKEFNGIILLLNNCPNLETLGFDI.

This is Putative F-box/LRR-repeat protein At5g54820 from Arabidopsis thaliana (Mouse-ear cress).